Consider the following 65-residue polypeptide: Large ribosomal subunit protein uL29 (65 aa).

It belongs to the universal ribosomal protein uL29 family.

In Methylococcus capsulatus (strain ATCC 33009 / NCIMB 11132 / Bath), this protein is Large ribosomal subunit protein uL29.